A 485-amino-acid polypeptide reads, in one-letter code: MALPPFFGQGRPGPPPPQPPPPAPFGCPPPPLPSPAFPPPLPQRPGPFPGASAPFLQPPLALQPRASAEASRGGGGAGAFYPVPPPPLPPPPPQCRPFPGTDAGERPRPPPPGPGPPWSPRWPEAPPPPADVLGDAALQRLRDRQWLEAVFGTPRRAGCPVPQRTHAGPSLGEVRARLLRALRLVRRLRGLSQALREAEADGAAWVLLYSQTAPLRAELAERLQPLTQAAYVGEARRRLERVRRRRLRLRERAREREAEREAEAARAVEREQEIDRWRVKCVQEVEEKKREQELKAAADGVLSEVRKKQADTKRMVDILRALEKLRKLRKEAAARKGVCPPASADETFTHHLQRLRKLIKKRSELYEAEERALRVMLEGEQEEERKRELEKKQRKEKEKILLQKREIESKLFGDPDEFPLAHLLEPFRQYYLQAEHSLPALIQIRHDWDQYLVPSDHPKGNFVPQGWVLPPLPSNDIWATAVKLH.

The tract at residues 1-133 (MALPPFFGQG…EAPPPPADVL (133 aa)) is disordered. Over residues 12–48 (PGPPPPQPPPPAPFGCPPPPLPSPAFPPPLPQRPGPF) the composition is skewed to pro residues. Residues 49 to 71 (PGASAPFLQPPLALQPRASAEAS) are compositionally biased toward low complexity. Pro residues-rich tracts occupy residues 82–96 (PVPPPPLPPPPPQCR) and 109–130 (PPPPGPGPPWSPRWPEAPPPPA). Coiled-coil stretches lie at residues 232-335 (VGEA…AAAR) and 362-411 (RSEL…ESKL).

As to quaternary structure, interacts with RBM40. Component of the U11/U12 snRNPs that are part of the U12-type spliceosome.

It localises to the nucleus. Promotes apoptosis when overexpressed. In Homo sapiens (Human), this protein is Programmed cell death protein 7 (PDCD7).